We begin with the raw amino-acid sequence, 482 residues long: Pentatricopeptide repeat-containing protein At1g74900, mitochondrial (482 aa).

11 PPR repeats span residues 90 to 124 (DASS…RIGP), 125 to 159 (SPKT…GCFQ), 160 to 190 (DLAS…LRGR), 194 to 228 (DTVT…GINP), 229 to 263 (NLTT…DCEI), 264 to 298 (DVVT…GVLP), 299 to 333 (SVAT…GYEP), 334 to 368 (NVTT…GCEP), 369 to 403 (NFQT…DCLP), 404 to 441 (NLDT…GFIP), and 442 to 476 (RKFT…GSRL).

This sequence belongs to the PPR family. P subfamily.

It is found in the mitochondrion. Functionally, required for the trans-splicing of intron 1 of the mitochondrial nad1 transcript encoding the ND1 subunit of the mitochondrial membrane respiratory chain NADH dehydrogenase (Complex I). In Arabidopsis thaliana (Mouse-ear cress), this protein is Pentatricopeptide repeat-containing protein At1g74900, mitochondrial (OTP43).